Here is a 95-residue protein sequence, read N- to C-terminus: Large ribosomal subunit protein bL25 (95 aa).

It belongs to the bacterial ribosomal protein bL25 family. In terms of assembly, part of the 50S ribosomal subunit; part of the 5S rRNA/L5/L18/L25 subcomplex. Contacts the 5S rRNA. Binds to the 5S rRNA independently of L5 and L18.

Its function is as follows. This is one of the proteins that binds to the 5S RNA in the ribosome where it forms part of the central protuberance. In Actinobacillus pleuropneumoniae serotype 3 (strain JL03), this protein is Large ribosomal subunit protein bL25.